A 320-amino-acid chain; its full sequence is tRNA dimethylallyltransferase (320 aa).

Residue 17-24 coordinates ATP; it reads GPTAVGKT. A substrate-binding site is contributed by 19-24; sequence TAVGKT. Residues 42–45 form an interaction with substrate tRNA region; the sequence is DSMQ.

It belongs to the IPP transferase family. Monomer. Mg(2+) is required as a cofactor.

The catalysed reaction is adenosine(37) in tRNA + dimethylallyl diphosphate = N(6)-dimethylallyladenosine(37) in tRNA + diphosphate. Functionally, catalyzes the transfer of a dimethylallyl group onto the adenine at position 37 in tRNAs that read codons beginning with uridine, leading to the formation of N6-(dimethylallyl)adenosine (i(6)A). This Bacillus thuringiensis (strain Al Hakam) protein is tRNA dimethylallyltransferase.